Here is a 655-residue protein sequence, read N- to C-terminus: MSLLSTISSPQDVKRLDHEELATLAAEIRDFLIHAVARTGGHLGPNLGAVELTLAIHRVFDSPFDRILWDTGHQSYVHKILTGRADDFSGLRQRGGLSGYPSRAESEHDIIENSHASTALSYADGLSRAYALRGEDRAVVAVVGDGALTGGMCWEALNNIAADDRPVVIVVNDNGRSYAPTIGGLADHLAALRLAPEYEQVLDVVKQVLGRTPLVGPPLFDALHGIKKGIKDVVQPQGMFEDLGLKYVGPVDGHDVVAVESALRRARDFGGPVIVHCVTRKGFGYPPAEQDDADNFHGVGIIDPATGKPVSTSKTISWTSIFSDEIVQIGSERPDVVTLTAAMLQPVGLGAFAKAYPDRVFDVGIAEQHAVTSAAGLAMGGLKPVVCLYATFLNRAFDQVLMDVALHRQPVTFVLDRAGITGEDGASHNGMWDLSFLQVVPGLAIAAPRDAPTLRAELREAVGDTDGPTVVRFPKGKVAVDVPAIDTVGGVDVLYRSPKVAQRREVLLVSIGAMAATCLEVAERVASQGIGITVVDPRWVKPLDPALIDLARAHDLVVTVEDNGRVGGVGAALAQLLRDADVDVPLRDFGIAQRFLDHGKRDEVMAEVGLAPQDLARKVVEAVAKRQPAIEDDPTSPGEAAPAGERAGEAIGDQR.

Thiamine diphosphate contacts are provided by residues His73 and 114-116; that span reads SHA. Asp145 contacts Mg(2+). Thiamine diphosphate contacts are provided by residues 146-147, Asn174, Tyr285, and Glu367; that span reads GA. Asn174 contacts Mg(2+). The interval 626–655 is disordered; it reads RQPAIEDDPTSPGEAAPAGERAGEAIGDQR. Residues 646 to 655 are compositionally biased toward basic and acidic residues; the sequence is RAGEAIGDQR.

This sequence belongs to the transketolase family. DXPS subfamily. In terms of assembly, homodimer. Requires Mg(2+) as cofactor. The cofactor is thiamine diphosphate.

It carries out the reaction D-glyceraldehyde 3-phosphate + pyruvate + H(+) = 1-deoxy-D-xylulose 5-phosphate + CO2. Its pathway is metabolic intermediate biosynthesis; 1-deoxy-D-xylulose 5-phosphate biosynthesis; 1-deoxy-D-xylulose 5-phosphate from D-glyceraldehyde 3-phosphate and pyruvate: step 1/1. Functionally, catalyzes the acyloin condensation reaction between C atoms 2 and 3 of pyruvate and glyceraldehyde 3-phosphate to yield 1-deoxy-D-xylulose-5-phosphate (DXP). This chain is 1-deoxy-D-xylulose-5-phosphate synthase, found in Frankia casuarinae (strain DSM 45818 / CECT 9043 / HFP020203 / CcI3).